The following is a 361-amino-acid chain: Replication-associated protein (361 aa).

Residues 8 to 116 (RINAKNYFLT…DGDVLDHGVF (109 aa)) form the CRESS-DNA virus Rep endonuclease domain. The RCR-1 motif lies at 15-18 (FLTY). A divalent metal cation is bound by residues E49, H57, and H59. Positions 57–59 (HLH) match the RCR-2 motif. Y103 functions as the For DNA cleavage activity in the catalytic mechanism. The short motif at 103–106 (YMEK) is the RCR-3 element. Position 107 (D107) interacts with a divalent metal cation. The binding to RBR1 stretch occupies residues 143-153 (KASALNILREK). The segment at 156–176 (KDFVLQFHNLNSNLDRIFTPP) is oligomerization. Position 221–228 (221–228 (GDSRTGKT)) interacts with ATP.

It belongs to the geminiviridae Rep protein family. Homooligomer. Interacts with the replication enhancer protein (REn). Interacts with host retinoblastoma-related protein 1 (RBR1), and may thereby induce the transcription of host replicative enzymes even if the cell is not dividing anymore. Interacts with host PCNA. Interacts with host SCE1 protein. It depends on Mg(2+) as a cofactor. Mn(2+) serves as cofactor.

It localises to the host nucleus. Functionally, essential for the replication of viral ssDNA. The closed circular ssDNA genome is first converted to a superhelical dsDNA. Rep binds a specific region at the genome origin of replication. It introduces an endonucleolytic nick within the conserved sequence 5'-TAATATTAC-3' in the intergenic region of the genome present in all geminiviruses, thereby initiating the rolling circle replication (RCR). Following cleavage, binds covalently to the 5'-phosphate of DNA as a tyrosyl ester. The cleavage gives rise to a free 3'-OH that serves as a primer for the cellular DNA polymerase. The polymerase synthesizes the (+) strand DNA by rolling circle mechanism. After one round of replication, a Rep-catalyzed nucleotidyl transfer reaction releases a circular single-stranded virus genome, thereby terminating the replication. Displays origin-specific DNA cleavage, nucleotidyl transferase, ATPase and helicase activities. The chain is Replication-associated protein from Tomato yellow leaf curl China virus (TYLCCNV).